The sequence spans 788 residues: Integrin beta-6 (788 aa).

The first 21 residues, 1 to 21 (MGIELLCLFFLFLGRNDHVQG), serve as a signal peptide directing secretion. One can recognise a PSI domain in the interval 22-71 (GCALGGAETCEDCLLIGPQCAWCAQENFTHPSGVGERCDTPANLLAKGCQ). At 22-709 (GCALGGAETC…KDCPKPPNIP (688 aa)) the chain is on the extracellular side. Cystine bridges form between Cys-23/Cys-41, Cys-31/Cys-454, Cys-34/Cys-59, Cys-44/Cys-70, Cys-197/Cys-204, Cys-252/Cys-293, Cys-394/Cys-406, Cys-426/Cys-452, Cys-456/Cys-476, Cys-467/Cys-479, Cys-481/Cys-490, Cys-492/Cys-519, Cys-502/Cys-517, Cys-511/Cys-522, Cys-524/Cys-537, Cys-539/Cys-560, Cys-544/Cys-558, Cys-552/Cys-563, and Cys-565/Cys-574. Residues Asn-48 and Asn-97 are each glycosylated (N-linked (GlcNAc...) asparagine). A VWFA domain is found at 131 to 371 (YPVDLYYLMD…QLIISAYEEL (241 aa)). 3 residues coordinate Mg(2+): Asp-140, Ser-142, and Ser-144. 4 residues coordinate Ca(2+): Ser-144, Asp-147, Asp-148, and Glu-179. Residues Asn-235, Asp-237, Pro-239, and Glu-240 each coordinate Ca(2+). Residue Glu-240 coordinates Mg(2+). Asn-260 carries N-linked (GlcNAc...) asparagine glycosylation. Ca(2+) contacts are provided by Asp-271 and Lys-355. 2 N-linked (GlcNAc...) asparagine glycosylation sites follow: Asn-387 and Asn-396. I-EGF domains follow at residues 456–491 (CQKE…PRCE), 492–538 (CGED…PYCQ), 539–575 (CDNF…EYCN), and 576–615 (CTTS…PTCE). 2 N-linked (GlcNAc...) asparagine glycosylation sites follow: Asn-463 and Asn-471. Residue Asn-541 is glycosylated (N-linked (GlcNAc...) asparagine). An N-linked (GlcNAc...) asparagine glycan is attached at Asn-575. Intrachain disulfides connect Cys-576-Cys-599, Cys-583-Cys-597, Cys-591-Cys-602, Cys-604-Cys-614, Cys-617-Cys-620, Cys-624-Cys-670, Cys-630-Cys-649, Cys-633-Cys-645, and Cys-678-Cys-702. Residues 710-730 (MIMLGVSLAILLIGVVLLCIW) traverse the membrane as a helical segment. Residues 731–758 (KLLVSFHDRKEVAKFEAERSKAKWQTGT) form an interaction with HAX1 region. Over 731–788 (KLLVSFHDRKEVAKFEAERSKAKWQTGTNPLYRGSTSTFKNVTYKHREKQKVDLSTDC) the chain is Cytoplasmic.

This sequence belongs to the integrin beta chain family. Heterodimer of an alpha and a beta subunit. Interacts with FLNB. Interacts with HAX1. ITGAV:ITGB6 interacts with FBN1. ITGAV:ITGB6 interacts with TGFB1. In terms of assembly, (Microbial infection) Integrin ITGAV:ITGB6 interacts with coxsackievirus A9, coxsackievirus B1 capsid proteins. As to quaternary structure, (Microbial infection) Integrin ITGAV:ITGB6 interacts with herpes simplex virus-1/HHV-1 gH:gL proteins.

It is found in the cell membrane. The protein localises to the cell junction. The protein resides in the focal adhesion. Its function is as follows. Integrin alpha-V:beta-6 (ITGAV:ITGB6) is a receptor for fibronectin and cytotactin. It recognizes the sequence R-G-D in its ligands. Internalization of integrin alpha-V/beta-6 via clathrin-mediated endocytosis promotes carcinoma cell invasion. ITGAV:ITGB6 acts as a receptor for fibrillin-1 (FBN1) and mediates R-G-D-dependent cell adhesion to FBN1. Integrin alpha-V:beta-6 (ITGAV:ITGB6) mediates R-G-D-dependent release of transforming growth factor beta-1 (TGF-beta-1) from regulatory Latency-associated peptide (LAP), thereby playing a key role in TGF-beta-1 activation. In terms of biological role, (Microbial infection) Integrin ITGAV:ITGB6 acts as a receptor for Coxsackievirus A9 and Coxsackievirus B1. Functionally, (Microbial infection) Integrin ITGAV:ITGB6 acts as a receptor for Herpes simplex virus-1/HHV-1. In Homo sapiens (Human), this protein is Integrin beta-6 (ITGB6).